Reading from the N-terminus, the 209-residue chain is Large ribosomal subunit protein uL3 (209 aa).

Residues 133-152 (THGNSLSHRVPGSIGQNQTP) form a disordered region. Gln150 carries the N5-methylglutamine modification.

It belongs to the universal ribosomal protein uL3 family. Part of the 50S ribosomal subunit. Forms a cluster with proteins L14 and L19. Post-translationally, methylated by PrmB.

Its function is as follows. One of the primary rRNA binding proteins, it binds directly near the 3'-end of the 23S rRNA, where it nucleates assembly of the 50S subunit. The sequence is that of Large ribosomal subunit protein uL3 from Yersinia enterocolitica serotype O:8 / biotype 1B (strain NCTC 13174 / 8081).